Consider the following 145-residue polypeptide: UPF0310 protein Mvan_0064 (145 aa).

The protein belongs to the UPF0310 family.

In Mycolicibacterium vanbaalenii (strain DSM 7251 / JCM 13017 / BCRC 16820 / KCTC 9966 / NRRL B-24157 / PYR-1) (Mycobacterium vanbaalenii), this protein is UPF0310 protein Mvan_0064.